We begin with the raw amino-acid sequence, 97 residues long: Putative membrane protein insertion efficiency factor (97 aa).

The tract at residues 77–97 (VPDAPASPSPSSSCSCKGPHP) is disordered. Positions 85–97 (SPSSSCSCKGPHP) are enriched in low complexity.

The protein belongs to the UPF0161 family.

It localises to the cell inner membrane. In terms of biological role, could be involved in insertion of integral membrane proteins into the membrane. The polypeptide is Putative membrane protein insertion efficiency factor (Xanthomonas euvesicatoria pv. vesicatoria (strain 85-10) (Xanthomonas campestris pv. vesicatoria)).